A 315-amino-acid chain; its full sequence is Petrobactin import system permease protein YclO (315 aa).

The next 9 helical transmembrane spans lie at 7 to 27 (IALL…YDLG), 40 to 60 (VAAI…FQTI), 76 to 96 (LYML…MVIM), 100 to 120 (INFI…YQIM), 128 to 148 (IFFL…LSSF), 172 to 192 (INTD…VYVW), 223 to 243 (LIVV…IMFL), 262 to 282 (YLIA…QFVV), and 288 to 308 (FSTT…IYLL).

The protein belongs to the binding-protein-dependent transport system permease family. FecCD subfamily. As to quaternary structure, the complex is composed of two ATP-binding proteins (YclP), two transmembrane proteins (YclN and YclO) and a solute-binding protein (YclQ).

It localises to the cell membrane. Part of the ABC transporter complex YclNOPQ involved in uptake of ferric-petrobactin. Petrobactin is a photoreactive 3,4-catecholate siderophore produced by many members of the B.cereus group, including B.anthracis. Probably responsible for the translocation of the substrate across the membrane. In Bacillus subtilis (strain 168), this protein is Petrobactin import system permease protein YclO (yclO).